The following is a 600-amino-acid chain: Glutamine--fructose-6-phosphate aminotransferase [isomerizing] (600 aa).

The active-site Nucleophile; for GATase activity is the C2. The 216-residue stretch at 2–217 (CGIVGFIGEQ…DKEIVIVMKE (216 aa)) folds into the Glutamine amidotransferase type-2 domain. 2 consecutive SIS domains span residues 283–422 (IRNA…AKGE) and 452–590 (LAKQ…VDKP). Residue K595 is the For Fru-6P isomerization activity of the active site.

In terms of assembly, homodimer.

Its subcellular location is the cytoplasm. It catalyses the reaction D-fructose 6-phosphate + L-glutamine = D-glucosamine 6-phosphate + L-glutamate. Functionally, catalyzes the first step in hexosamine metabolism, converting fructose-6P into glucosamine-6P using glutamine as a nitrogen source. In Bacillus anthracis, this protein is Glutamine--fructose-6-phosphate aminotransferase [isomerizing].